Reading from the N-terminus, the 381-residue chain is MRVGLVCPYSFARPGGVQNHVLGLGGWLKEQGHDVSIIAPGQASRSLLAETGLVPSEFVSAGRAVPVTFNGSVARINFGVGPALKVKKWLDQGNFDVVHLHEPIAPTICLLALYLTDRPVTATFHTATPELTAIRFANRVLPRMVSRIDAAIAVSSEAADVAHHYSGVNPVVIGNGIHLADYPLVRATSRWRGGEHPLITFLGRYDEPRKGFEVLTAALPLVRATYPDLEVVVIGSGTARSVEGVRFLGGLDDEERNAWLGRSDIYIAPQTGRESFGIVLLEAMACGAPVVAANLRAFLDVLTDDEGLVGHTFRVGNSASASRAMLRSLSEPRDLRLERGRALAANYDWSVIGPQVVAMYTVAGQNYATSRGIKNRELKGH.

2 residues coordinate GDP-alpha-D-mannose: Tyr9 and Gly16. A 1,2-diacyl-sn-glycero-3-phospho-(1D-myo-inositol) contacts are provided by residues Gln18, 69–70 (FN), and Arg75. Residues Arg204, 209–210 (RK), 251–253 (LDD), Arg256, 274–278 (ESFGI), and Glu282 contribute to the GDP-alpha-D-mannose site.

The protein belongs to the glycosyltransferase group 1 family. Glycosyltransferase 4 subfamily. As to quaternary structure, monomer. It depends on Mg(2+) as a cofactor.

The protein localises to the cell membrane. The enzyme catalyses a 1,2-diacyl-sn-glycero-3-phospho-(1D-myo-inositol) + GDP-alpha-D-mannose = a 1,2-diacyl-sn-glycero-3-phospho-[alpha-D-mannopyranosyl-(1&lt;-&gt;6)-D-myo-inositol] + GDP + H(+). It functions in the pathway phospholipid metabolism; phosphatidylinositol metabolism. Involved in the biosynthesis of phosphatidyl-myo-inositol mannosides (PIM) which are early precursors in the biosynthesis of lipomannans (LM) and lipoarabinomannans (LAM). Catalyzes the addition of a mannosyl residue from GDP-D-mannose (GDP-Man) to the position 2 of the carrier lipid phosphatidyl-myo-inositol (PI) to generate a phosphatidyl-myo-inositol bearing an alpha-1,2-linked mannose residue (PIM1). In Propionibacterium freudenreichii subsp. shermanii (strain ATCC 9614 / DSM 4902 / CIP 103027 / NCIMB 8099 / CIRM-BIA1), this protein is Phosphatidyl-myo-inositol mannosyltransferase.